Reading from the N-terminus, the 235-residue chain is Probable carboxylesterase Os04g0669600 (235 aa).

Residues Ser-113, Asp-167, and His-199 each act as charge relay system in the active site.

The protein belongs to the AB hydrolase superfamily. AB hydrolase 2 family.

Its function is as follows. Possesses carboxylesterase activity in vitro. This Oryza sativa subsp. japonica (Rice) protein is Probable carboxylesterase Os04g0669600.